The sequence spans 418 residues: Tyrosine--tRNA ligase (418 aa).

Y34 serves as a coordination point for L-tyrosine. A 'HIGH' region motif is present at residues 39-48; that stretch reads PTADSLHLGH. The L-tyrosine site is built by Y169 and Q173. A 'KMSKS' region motif is present at residues 229 to 233; sequence KFGKS. K232 provides a ligand contact to ATP. Residues 352–418 enclose the S4 RNA-binding domain; that stretch reads NNIVELLVSS…GKKKYFVLTY (67 aa).

Belongs to the class-I aminoacyl-tRNA synthetase family. TyrS type 1 subfamily. Homodimer.

It localises to the cytoplasm. It catalyses the reaction tRNA(Tyr) + L-tyrosine + ATP = L-tyrosyl-tRNA(Tyr) + AMP + diphosphate + H(+). Functionally, catalyzes the attachment of tyrosine to tRNA(Tyr) in a two-step reaction: tyrosine is first activated by ATP to form Tyr-AMP and then transferred to the acceptor end of tRNA(Tyr). The polypeptide is Tyrosine--tRNA ligase (Streptococcus pneumoniae serotype 19F (strain G54)).